We begin with the raw amino-acid sequence, 220 residues long: Iron-sulfur cluster repair protein YtfE (220 aa).

The protein belongs to the RIC family. YtfE subfamily. Homodimer.

It is found in the cytoplasm. Di-iron-containing protein involved in the repair of iron-sulfur clusters damaged by oxidative and nitrosative stress conditions. The protein is Iron-sulfur cluster repair protein YtfE of Escherichia coli O8 (strain IAI1).